Consider the following 194-residue polypeptide: CASP-like protein Ni6 (194 aa).

At 1–27 the chain is on the cytoplasmic side; the sequence is MSSMETEKGAVPTPQAPPVAPTDNKYR. A helical transmembrane segment spans residues 28 to 48; that stretch reads VVDVILRVLLLAASIASVVLM. Topologically, residues 49–75 are extracellular; sequence VTSKQTEIIVSPFGSRPNAAKFQNSPA. A helical transmembrane segment spans residues 76–96; that stretch reads FIYLVAALSVAGLYSIITALV. Residues 97-109 are Cytoplasmic-facing; sequence SLSYMRKPIVPPK. Residues 110–130 form a helical membrane-spanning segment; it reads LFWILLIHDVLLLGIVAAATG. Residues 131-161 lie on the Extracellular side of the membrane; the sequence is TAGGVGYIGLKGNTHVRWGKIRNVYDKFCRH. Residues 162–182 form a helical membrane-spanning segment; the sequence is VGASIIVSLFAAAVLVLLVFV. Topologically, residues 183-194 are cytoplasmic; it reads NANSLYRRIPKY.

The protein belongs to the Casparian strip membrane proteins (CASP) family. As to quaternary structure, homodimer and heterodimers.

Its subcellular location is the cell membrane. This chain is CASP-like protein Ni6 (Ni6), found in Beta vulgaris subsp. maritima (Sea beet).